The sequence spans 284 residues: D-tagatose-1,6-bisphosphate aldolase subunit GatY (284 aa).

Asp-82 (proton donor) is an active-site residue. Positions 83 and 180 each coordinate Zn(2+). Dihydroxyacetone phosphate is bound at residue Gly-181. Zn(2+) is bound at residue His-208. Dihydroxyacetone phosphate-binding positions include Gly-209–Ser-211 and Asn-230–Thr-233.

It belongs to the class II fructose-bisphosphate aldolase family. TagBP aldolase GatY subfamily. In terms of assembly, forms a complex with GatZ. It depends on Zn(2+) as a cofactor.

It carries out the reaction D-tagatofuranose 1,6-bisphosphate = D-glyceraldehyde 3-phosphate + dihydroxyacetone phosphate. Its pathway is carbohydrate metabolism; D-tagatose 6-phosphate degradation; D-glyceraldehyde 3-phosphate and glycerone phosphate from D-tagatose 6-phosphate: step 2/2. In terms of biological role, catalytic subunit of the tagatose-1,6-bisphosphate aldolase GatYZ, which catalyzes the reversible aldol condensation of dihydroxyacetone phosphate (DHAP or glycerone-phosphate) with glyceraldehyde 3-phosphate (G3P) to produce tagatose 1,6-bisphosphate (TBP). Requires GatZ subunit for full activity and stability. Is involved in the catabolism of galactitol. This Escherichia coli protein is D-tagatose-1,6-bisphosphate aldolase subunit GatY (gatY).